The primary structure comprises 92 residues: Small ribosomal subunit protein bS20 (92 aa).

It belongs to the bacterial ribosomal protein bS20 family.

Binds directly to 16S ribosomal RNA. The sequence is that of Small ribosomal subunit protein bS20 from Rickettsia africae (strain ESF-5).